The chain runs to 392 residues: Acyl-CoA dehydrogenase IpdE1 (392 aa).

Residues 126 to 129 (QGYS) and Ser171 contribute to the FAD site. Glu254 functions as the Proton acceptor in the catalytic mechanism. 371–373 (SNE) contacts FAD.

The protein belongs to the acyl-CoA dehydrogenase family. Heterotetramer composed of 2 IpdE1 subunits and 2 IpdE2 subunits. FAD is required as a cofactor.

The enzyme catalyses 3-[(3aS,4S,5R,7aS)-5-hydroxy-7a-methyl-1-oxo-octahydro-1H-inden-4-yl]propanoyl-CoA + A = (2E)-3-[(3aS,4S,5R,7aS)-5-hydroxy-7a-methyl-1-oxo-octahydro-1H-inden-4-yl]prop-2-enoyl-CoA + AH2. It participates in steroid metabolism; cholesterol degradation. Functionally, involved in cholesterol degradation. Catalyzes the dehydrogenation of 5OH-HIP-CoA to 5OH-HIPE-CoA. In Mycolicibacterium smegmatis (strain ATCC 700084 / mc(2)155) (Mycobacterium smegmatis), this protein is Acyl-CoA dehydrogenase IpdE1.